The chain runs to 463 residues: NADH-ubiquinone oxidoreductase chain 4 (463 aa).

13 helical membrane-spanning segments follow: residues 24–44 (LWAG…IVLN), 62–82 (TISA…LIAS), 98–118 (IIMI…LELI), 119–139 (LFYI…TRWG), 151–171 (FMFY…AIYI), 198–218 (WALS…HLWL), 232–252 (ILAA…IALF), 260–280 (LSLA…VICV), 285–305 (LKAL…AAIF), 310–330 (WGMN…SALF), 353–373 (LLLP…LGLP), 404–424 (VFGA…TPFT), and 442–462 (LHIL…IAWL).

Belongs to the complex I subunit 4 family.

The protein resides in the mitochondrion membrane. It catalyses the reaction a ubiquinone + NADH + 5 H(+)(in) = a ubiquinol + NAD(+) + 4 H(+)(out). Functionally, core subunit of the mitochondrial membrane respiratory chain NADH dehydrogenase (Complex I) that is believed to belong to the minimal assembly required for catalysis. Complex I functions in the transfer of electrons from NADH to the respiratory chain. The immediate electron acceptor for the enzyme is believed to be ubiquinone. The sequence is that of NADH-ubiquinone oxidoreductase chain 4 (ND4) from Strongylocentrotus purpuratus (Purple sea urchin).